Here is a 197-residue protein sequence, read N- to C-terminus: Segregation and condensation protein B (197 aa).

This sequence belongs to the ScpB family. Homodimer. Homodimerization may be required to stabilize the binding of ScpA to the Smc head domains. Component of a cohesin-like complex composed of ScpA, ScpB and the Smc homodimer, in which ScpA and ScpB bind to the head domain of Smc. The presence of the three proteins is required for the association of the complex with DNA.

Its subcellular location is the cytoplasm. Participates in chromosomal partition during cell division. May act via the formation of a condensin-like complex containing Smc and ScpA that pull DNA away from mid-cell into both cell halves. The chain is Segregation and condensation protein B from Syntrophotalea carbinolica (strain DSM 2380 / NBRC 103641 / GraBd1) (Pelobacter carbinolicus).